A 105-amino-acid polypeptide reads, in one-letter code: Vacuolar ATPase assembly integral membrane protein VMA21 homolog (105 aa).

Residues 1-26 are disordered; that stretch reads MSTKNKKAAGGNGVAPKQTRQQSHDS. Residues 1 to 36 lie on the Cytoplasmic side of the membrane; the sequence is MSTKNKKAAGGNGVAPKQTRQQSHDSQDYSSFKTVL. A helical transmembrane segment spans residues 37–57; the sequence is FYCMLIVFLPVLTFFVLKGFV. The Lumenal portion of the chain corresponds to 58 to 68; that stretch reads LDQFLDISEVK. The helical transmembrane segment at 69 to 89 threads the bilayer; the sequence is VNIASAVGAVVALHIALGLYI. Residues 90–105 are Cytoplasmic-facing; that stretch reads YRAYFGAPGSKGSKTD.

This sequence belongs to the VMA21 family.

The protein resides in the endoplasmic reticulum membrane. It localises to the endoplasmic reticulum-Golgi intermediate compartment membrane. Its subcellular location is the cytoplasmic vesicle. It is found in the COPII-coated vesicle membrane. Functionally, required for the assembly of the V0 complex of the vacuolar ATPase (V-ATPase) in the endoplasmic reticulum. This Drosophila melanogaster (Fruit fly) protein is Vacuolar ATPase assembly integral membrane protein VMA21 homolog.